The chain runs to 203 residues: A-type ATP synthase subunit E (203 aa).

The protein belongs to the V-ATPase E subunit family. In terms of assembly, has multiple subunits with at least A(3), B(3), C, D, E, F, H, I and proteolipid K(x).

Its subcellular location is the cell membrane. In terms of biological role, component of the A-type ATP synthase that produces ATP from ADP in the presence of a proton gradient across the membrane. The chain is A-type ATP synthase subunit E from Thermococcus onnurineus (strain NA1).